Consider the following 505-residue polypeptide: Amidophosphoribosyltransferase (505 aa).

Residue Cys-2 is the Nucleophile of the active site. A Glutamine amidotransferase type-2 domain is found at 2-235 (CGIVGIVSQS…AGEAVYVTFD (234 aa)). 3 residues coordinate Mg(2+): Thr-306, Asp-368, and Asp-369. The tract at residues 484-505 (RNDNAKKKREKQASNLEIYNEQ) is disordered. Polar residues predominate over residues 496–505 (ASNLEIYNEQ).

In the C-terminal section; belongs to the purine/pyrimidine phosphoribosyltransferase family. Mg(2+) is required as a cofactor.

It carries out the reaction 5-phospho-beta-D-ribosylamine + L-glutamate + diphosphate = 5-phospho-alpha-D-ribose 1-diphosphate + L-glutamine + H2O. Its pathway is purine metabolism; IMP biosynthesis via de novo pathway; N(1)-(5-phospho-D-ribosyl)glycinamide from 5-phospho-alpha-D-ribose 1-diphosphate: step 1/2. Its function is as follows. Catalyzes the formation of phosphoribosylamine from phosphoribosylpyrophosphate (PRPP) and glutamine. The polypeptide is Amidophosphoribosyltransferase (Haemophilus influenzae (strain ATCC 51907 / DSM 11121 / KW20 / Rd)).